The primary structure comprises 274 residues: Large ribosomal subunit protein uL2 (274 aa).

The disordered stretch occupies residues 221–274 (RGTAMNPVDHPHGGGEGRNFGKHPVTPWGVQTKGKKTRSNKRTDKFIVRRRSKK).

This sequence belongs to the universal ribosomal protein uL2 family. Part of the 50S ribosomal subunit. Forms a bridge to the 30S subunit in the 70S ribosome.

In terms of biological role, one of the primary rRNA binding proteins. Required for association of the 30S and 50S subunits to form the 70S ribosome, for tRNA binding and peptide bond formation. It has been suggested to have peptidyltransferase activity; this is somewhat controversial. Makes several contacts with the 16S rRNA in the 70S ribosome. This chain is Large ribosomal subunit protein uL2, found in Yersinia enterocolitica.